The following is a 370-amino-acid chain: Ubiquinone biosynthesis O-methyltransferase, mitochondrial (370 aa).

Residues 1 to 86 (MWGGSKLSSS…SYRLPWTRPY (86 aa)) constitute a mitochondrion transit peptide. R125 contributes to the S-adenosyl-L-methionine binding site. Residues K144 and K150 each carry the N6-acetyllysine modification. G155 and D176 together coordinate S-adenosyl-L-methionine. K197 bears the N6-acetyllysine mark. S223 is a binding site for S-adenosyl-L-methionine. Residues E224, E227, and H228 each coordinate Mg(2+).

The protein belongs to the class I-like SAM-binding methyltransferase superfamily. UbiG/COQ3 family. As to quaternary structure, component of a multi-subunit COQ enzyme complex, composed of at least COQ3, COQ4, COQ5, COQ6, COQ7 and COQ9. Mg(2+) serves as cofactor.

The protein localises to the mitochondrion inner membrane. The enzyme catalyses 3,4-dihydroxy-5-(all-trans-decaprenyl)benzoate + S-adenosyl-L-methionine = 4-hydroxy-3-methoxy-5-(all-trans-decaprenyl)benzoate + S-adenosyl-L-homocysteine + H(+). The catalysed reaction is a 3-demethylubiquinone + S-adenosyl-L-methionine = a ubiquinone + S-adenosyl-L-homocysteine. It carries out the reaction 3-demethylubiquinol-10 + S-adenosyl-L-methionine = ubiquinol-10 + S-adenosyl-L-homocysteine + H(+). Its pathway is cofactor biosynthesis; ubiquinone biosynthesis. Functionally, O-methyltransferase required for two non-consecutive steps during ubiquinone biosynthesis. Catalyzes the 2 O-methylation of 3,4-dihydroxy-5-(all-trans-decaprenyl)benzoic acid into 4-hydroxy-3-methoxy-5-(all-trans-decaprenyl)benzoic acid. Also catalyzes the last step of ubiquinone biosynthesis by mediating methylation of 3-demethylubiquinone into ubiquinone. Also able to mediate the methylation of 3-demethylubiquinol-10 into ubiquinol-10. The chain is Ubiquinone biosynthesis O-methyltransferase, mitochondrial from Bos taurus (Bovine).